The chain runs to 196 residues: Probable nicotinate-nucleotide adenylyltransferase (196 aa).

It belongs to the NadD family.

The catalysed reaction is nicotinate beta-D-ribonucleotide + ATP + H(+) = deamido-NAD(+) + diphosphate. It participates in cofactor biosynthesis; NAD(+) biosynthesis; deamido-NAD(+) from nicotinate D-ribonucleotide: step 1/1. Catalyzes the reversible adenylation of nicotinate mononucleotide (NaMN) to nicotinic acid adenine dinucleotide (NaAD). The sequence is that of Probable nicotinate-nucleotide adenylyltransferase from Caldicellulosiruptor bescii (strain ATCC BAA-1888 / DSM 6725 / KCTC 15123 / Z-1320) (Anaerocellum thermophilum).